A 619-amino-acid chain; its full sequence is MAGPDQHYEPAIDKRDFDDHRPLLHDIDTGIDGTGDGRLRSDSRLSAFRNLDGGSDGLLNDVVDEIVERDRRKMAMEVMRVCSFAVGVISCLGAGSITAFSLYGPLFLTRLHYSQLQVNAVSIAAEISMYLPVPLFGYLCDRYTPSPLALLSGLVFGGGYLLAAFAYRSGPLPEAGGEGWPPWVMVVAFVAIGTATSCMYLAAVTTCAKNFGRGKHKGIMLAVPIAGFGLSGMWQSQVATYLLCERREDGSRGDVDVFRYFLFLALFLFCLGVIGTFGLRIVDEEEDQYIDEAVEELERSGLLEESEFFRPRSEVQAAYGTFSDAADGDAPGPELSLTLSEEEREAARLEKEREEEERRKKNWLLNFETRLFLQDQTMWWLAVGFFLVTGPGEAYINNLGTIIQTLTPELHPPNAPSPAGLPSTHVTIIALTSTIARLLTGSLSDFFAPPATHLFPANIESGRRSSQSGPTAKRPTLSRLAFLLPSALLLSLGYLLLSSPLPLQHPGLSHVTTALIGLGYGSAFSLVPIIISVVWGVENFGTNWGIVAMVPAAGAAMWGVIYSRGYQDATDGGNGSPDGQCHGWRCYGFWAVGCTLSVWVAVVAWILAWRGWRRRGVVV.

A run of 12 helical transmembrane segments spans residues 88–108 (VISC…PLFL), 120–140 (AVSI…GYLC), 147–167 (PLAL…AFAY), 184–204 (VMVV…LAAV), 219–239 (IMLA…SQVA), 261–281 (FLFL…GLRI), 377–397 (TMWW…AYIN), 428–448 (IIAL…DFFA), 480–500 (LAFL…LSSP), 515–535 (LIGL…SVVW), 541–561 (GTNW…WGVI), and 589–609 (FWAV…ILAW).

It belongs to the major facilitator superfamily.

It is found in the vacuole membrane. In terms of biological role, probable transporter. This chain is Probable transporter mch1 (mch1), found in Aspergillus fumigatus (strain ATCC MYA-4609 / CBS 101355 / FGSC A1100 / Af293) (Neosartorya fumigata).